The sequence spans 506 residues: Ribose import ATP-binding protein RbsA (506 aa).

ABC transporter domains are found at residues 5–237 (VQLI…VGRP) and 249–492 (PFGA…LAIE). An ATP-binding site is contributed by 37-44 (GENGAGKS).

This sequence belongs to the ABC transporter superfamily. Ribose importer (TC 3.A.1.2.1) family. As to quaternary structure, the complex is composed of an ATP-binding protein (RbsA), two transmembrane proteins (RbsC) and a solute-binding protein (RbsB).

The protein resides in the cell inner membrane. It carries out the reaction D-ribose(out) + ATP + H2O = D-ribose(in) + ADP + phosphate + H(+). Functionally, part of the ABC transporter complex RbsABC involved in ribose import. Responsible for energy coupling to the transport system. The chain is Ribose import ATP-binding protein RbsA from Chelativorans sp. (strain BNC1).